A 309-amino-acid polypeptide reads, in one-letter code: Pantothenate kinase (309 aa).

92-99 (GSVAVGKS) lines the ATP pocket.

The protein belongs to the prokaryotic pantothenate kinase family.

The protein resides in the cytoplasm. The enzyme catalyses (R)-pantothenate + ATP = (R)-4'-phosphopantothenate + ADP + H(+). It functions in the pathway cofactor biosynthesis; coenzyme A biosynthesis; CoA from (R)-pantothenate: step 1/5. This Latilactobacillus sakei subsp. sakei (strain 23K) (Lactobacillus sakei subsp. sakei) protein is Pantothenate kinase.